Reading from the N-terminus, the 864-residue chain is A-kinase anchor protein 3 (864 aa).

Ser12 bears the Phosphoserine; by STK33 mark. The segment at 125-138 is PKA-RII subunit binding domain; the sequence is VSFYANRLTNLVIA. Disordered stretches follow at residues 190-235 and 251-281; these read NISS…DKPG and AGDAKEGGRSLPGDQKLFRTSPDNRPDDFSN. Residues 204 to 218 are compositionally biased toward polar residues; it reads SGSSQAPGLRYTSTL. Ser206 carries the post-translational modification Phosphoserine. Residues 219 to 235 show a composition bias toward basic and acidic residues; sequence KIKESTKEGKCPDDKPG. Ser405 is modified (phosphoserine). Residue Tyr406 is modified to Phosphotyrosine. The disordered stretch occupies residues 619 to 638; the sequence is VHEQNTQEEEIHPCERPKTP. The segment covering 627–638 has biased composition (basic and acidic residues); sequence EEIHPCERPKTP.

Belongs to the AKAP110 family. As to quaternary structure, interacts with ROPN1 and ROPN1L. Interacts with QRICH2. In terms of processing, phosphorylated by STK33 during sperm flagella assembly. Phosphorylated on tyrosine.

It localises to the cytoplasmic vesicle. Its subcellular location is the secretory vesicle. The protein resides in the acrosome. It is found in the cell projection. The protein localises to the cilium. It localises to the flagellum. In terms of biological role, structural component of sperm fibrous sheath. Required for the formation of the subcellular structure of the sperm flagellum, sperm motility and male fertility. The protein is A-kinase anchor protein 3 of Mus musculus (Mouse).